A 157-amino-acid polypeptide reads, in one-letter code: Putative dehydration-responsive element-binding protein 2H (157 aa).

Positions 5–21 match the Nuclear localization signal motif; the sequence is RKSRGTRDVAEILRKWR. Residues 29–57 form a disordered region; the sequence is ADSCIDGGGSKPIRKAPPKRSRKGCMKGK. A compositionally biased stretch (basic residues) spans 40 to 54; the sequence is PIRKAPPKRSRKGCM. Positions 66-123 form a DNA-binding region, AP2/ERF; that stretch reads DYTGVRQRTWGKWVAEIREPGRGAKLWLGTFSSSYEAALAYDEASKAIYGQSARLNLP.

Belongs to the AP2/ERF transcription factor family. ERF subfamily.

The protein localises to the nucleus. Functionally, putative transcriptional activator that binds specifically to the DNA sequence 5'-[AG]CCGAC-3'. The protein is Putative dehydration-responsive element-binding protein 2H (DREB2H) of Arabidopsis thaliana (Mouse-ear cress).